The primary structure comprises 775 residues: Lon protease (775 aa).

The Lon N-terminal domain occupies Leu6–Ile207. Gly356 to Thr363 is a binding site for ATP. In terms of domain architecture, Lon proteolytic spans Asn592 to Lys773. Residues Ser679 and Lys722 contribute to the active site.

Belongs to the peptidase S16 family. In terms of assembly, homohexamer. Organized in a ring with a central cavity.

The protein localises to the cytoplasm. The enzyme catalyses Hydrolysis of proteins in presence of ATP.. Its function is as follows. ATP-dependent serine protease that mediates the selective degradation of mutant and abnormal proteins as well as certain short-lived regulatory proteins. Required for cellular homeostasis and for survival from DNA damage and developmental changes induced by stress. Degrades polypeptides processively to yield small peptide fragments that are 5 to 10 amino acids long. Binds to DNA in a double-stranded, site-specific manner. This is Lon protease from Rickettsia bellii (strain RML369-C).